The sequence spans 187 residues: Putative AgrB-like protein 1 (187 aa).

5 helical membrane passes run 29–49 (VVIVLTFEFIKCISVILIAGI), 50–70 (LGYFKESLIVILSMCFIKPFI), 81–98 (CFIATLIITTSIIMLVTF), 103–120 (LFSIVILNLFSIFSIYNK), and 149–169 (ILFLITLIFFKISWISQTITW).

Belongs to the AgrB family.

Its subcellular location is the cell membrane. Functionally, may be involved in the proteolytic processing of a quorum sensing system signal molecule precursor. The sequence is that of Putative AgrB-like protein 1 from Clostridium perfringens (strain 13 / Type A).